The primary structure comprises 238 residues: Ribitol-5-phosphate cytidylyltransferase 2 (238 aa).

CTP contacts are provided by residues 7 to 10 and 81 to 87; these read LAGG and GTDRNET.

This sequence belongs to the IspD/TarI cytidylyltransferase family. TarI subfamily.

It carries out the reaction D-ribitol 5-phosphate + CTP + H(+) = CDP-L-ribitol + diphosphate. It participates in cell wall biogenesis; poly(ribitol phosphate) teichoic acid biosynthesis. Catalyzes the transfer of the cytidylyl group of CTP to D-ribitol 5-phosphate. This Staphylococcus aureus (strain MSSA476) protein is Ribitol-5-phosphate cytidylyltransferase 2.